The following is a 155-amino-acid chain: Small ribosomal subunit protein uS7c (155 aa).

Belongs to the universal ribosomal protein uS7 family. In terms of assembly, part of the 30S ribosomal subunit.

Its subcellular location is the plastid. Its function is as follows. One of the primary rRNA binding proteins, it binds directly to 16S rRNA where it nucleates assembly of the head domain of the 30S subunit. In Aneura mirabilis (Parasitic liverwort), this protein is Small ribosomal subunit protein uS7c (rps7).